Reading from the N-terminus, the 735-residue chain is Stonin-1 (735 aa).

Residues 1–35 (MCSTNPGKWVTFDDDPAVQSSQKSKNFPLENQGVC) are disordered. Residues 275–408 (GWSFMLRIPE…KLPAVSKPKK (134 aa)) enclose the SHD domain. In terms of domain architecture, MHD spans 412 to 715 (EQEISLEIVD…ACYNIQVEIE (304 aa)).

Belongs to the Stoned B family. Ubiquitous.

It is found in the cytoplasm. The protein resides in the membrane. Functionally, may be involved in the endocytic machinery. In Homo sapiens (Human), this protein is Stonin-1 (STON1).